The chain runs to 556 residues: 2-succinyl-5-enolpyruvyl-6-hydroxy-3-cyclohexene-1-carboxylate synthase (556 aa).

The protein belongs to the TPP enzyme family. MenD subfamily. Homodimer. Requires Mg(2+) as cofactor. The cofactor is Mn(2+). Thiamine diphosphate is required as a cofactor.

It catalyses the reaction isochorismate + 2-oxoglutarate + H(+) = 5-enolpyruvoyl-6-hydroxy-2-succinyl-cyclohex-3-ene-1-carboxylate + CO2. The protein operates within quinol/quinone metabolism; 1,4-dihydroxy-2-naphthoate biosynthesis; 1,4-dihydroxy-2-naphthoate from chorismate: step 2/7. It participates in quinol/quinone metabolism; menaquinone biosynthesis. Functionally, catalyzes the thiamine diphosphate-dependent decarboxylation of 2-oxoglutarate and the subsequent addition of the resulting succinic semialdehyde-thiamine pyrophosphate anion to isochorismate to yield 2-succinyl-5-enolpyruvyl-6-hydroxy-3-cyclohexene-1-carboxylate (SEPHCHC). In Staphylococcus epidermidis (strain ATCC 12228 / FDA PCI 1200), this protein is 2-succinyl-5-enolpyruvyl-6-hydroxy-3-cyclohexene-1-carboxylate synthase.